A 643-amino-acid polypeptide reads, in one-letter code: tRNA 5-methylaminomethyl-2-thiouridine biosynthesis bifunctional protein MnmC (643 aa).

The interval 1–223 (MPDRLVSATL…VDDRLVGDYA (223 aa)) is tRNA (mnm(5)s(2)U34)-methyltransferase. The FAD-dependent cmnm(5)s(2)U34 oxidoreductase stretch occupies residues 247–643 (IGAGLAGCAV…LRARRVGSAG (397 aa)).

This sequence in the N-terminal section; belongs to the methyltransferase superfamily. tRNA (mnm(5)s(2)U34)-methyltransferase family. It in the C-terminal section; belongs to the DAO family. It depends on FAD as a cofactor.

Its subcellular location is the cytoplasm. It carries out the reaction 5-aminomethyl-2-thiouridine(34) in tRNA + S-adenosyl-L-methionine = 5-methylaminomethyl-2-thiouridine(34) in tRNA + S-adenosyl-L-homocysteine + H(+). Its function is as follows. Catalyzes the last two steps in the biosynthesis of 5-methylaminomethyl-2-thiouridine (mnm(5)s(2)U) at the wobble position (U34) in tRNA. Catalyzes the FAD-dependent demodification of cmnm(5)s(2)U34 to nm(5)s(2)U34, followed by the transfer of a methyl group from S-adenosyl-L-methionine to nm(5)s(2)U34, to form mnm(5)s(2)U34. The polypeptide is tRNA 5-methylaminomethyl-2-thiouridine biosynthesis bifunctional protein MnmC (Burkholderia orbicola (strain MC0-3)).